A 147-amino-acid polypeptide reads, in one-letter code: uncharacterized protein (147 aa).

2 helical membrane passes run 35 to 55 (TIQLAGWISVLFMLGYNFGNH) and 62 to 82 (IWLLVITALLVIGLLIHLFEP).

Has been detected in a cytochrome bc1-aa3 supercomplex; its deletion however leaves complex activity unaffected.

The protein resides in the cell membrane. This is an uncharacterized protein from Corynebacterium glutamicum (strain ATCC 13032 / DSM 20300 / JCM 1318 / BCRC 11384 / CCUG 27702 / LMG 3730 / NBRC 12168 / NCIMB 10025 / NRRL B-2784 / 534).